We begin with the raw amino-acid sequence, 489 residues long: Squalene monooxygenase (489 aa).

The chain crosses the membrane as a helical span at residues 10-30 (VTYDALIVGAGVIGPCVATAL). Residues 21 to 22 (VI), 41 to 42 (ER), arginine 49, arginine 151, valine 167, aspartate 328, and methionine 341 each bind FAD. Helical transmembrane passes span 426–446 (FLAGVLPKPLLLTRVFFAVAF) and 464–484 (ALLEGIMILITAIKVFTPFLV).

Belongs to the squalene monooxygenase family. FAD is required as a cofactor.

The protein resides in the microsome membrane. The protein localises to the endoplasmic reticulum membrane. The catalysed reaction is squalene + reduced [NADPH--hemoprotein reductase] + O2 = (S)-2,3-epoxysqualene + oxidized [NADPH--hemoprotein reductase] + H2O + H(+). It functions in the pathway terpene metabolism; lanosterol biosynthesis; lanosterol from farnesyl diphosphate: step 2/3. In terms of biological role, catalyzes the stereospecific oxidation of squalene to (S)-2,3-epoxysqualene, and is considered to be a rate-limiting enzyme in steroid biosynthesis. The chain is Squalene monooxygenase (ERG1) from Candida glabrata (strain ATCC 2001 / BCRC 20586 / JCM 3761 / NBRC 0622 / NRRL Y-65 / CBS 138) (Yeast).